We begin with the raw amino-acid sequence, 93 residues long: Small ribosomal subunit protein uS19 (93 aa).

Belongs to the universal ribosomal protein uS19 family.

In terms of biological role, protein S19 forms a complex with S13 that binds strongly to the 16S ribosomal RNA. The polypeptide is Small ribosomal subunit protein uS19 (Microcystis aeruginosa (strain NIES-843 / IAM M-2473)).